The sequence spans 305 residues: Glycine--tRNA ligase alpha subunit (305 aa).

It belongs to the class-II aminoacyl-tRNA synthetase family. As to quaternary structure, tetramer of two alpha and two beta subunits.

Its subcellular location is the cytoplasm. The catalysed reaction is tRNA(Gly) + glycine + ATP = glycyl-tRNA(Gly) + AMP + diphosphate. In Vibrio campbellii (strain ATCC BAA-1116), this protein is Glycine--tRNA ligase alpha subunit.